Consider the following 118-residue polypeptide: Small ribosomal subunit protein uS13 (118 aa).

Residues 99–118 (GQRTRTNARTRKGPRKAIKK) form a disordered region.

The protein belongs to the universal ribosomal protein uS13 family. As to quaternary structure, part of the 30S ribosomal subunit. Forms a loose heterodimer with protein S19. Forms two bridges to the 50S subunit in the 70S ribosome.

In terms of biological role, located at the top of the head of the 30S subunit, it contacts several helices of the 16S rRNA. In the 70S ribosome it contacts the 23S rRNA (bridge B1a) and protein L5 of the 50S subunit (bridge B1b), connecting the 2 subunits; these bridges are implicated in subunit movement. Contacts the tRNAs in the A and P-sites. The chain is Small ribosomal subunit protein uS13 from Xylella fastidiosa (strain M23).